The sequence spans 510 residues: ATP synthase subunit alpha (510 aa).

Residue 169–176 (GDRQTGKT) coordinates ATP.

It belongs to the ATPase alpha/beta chains family. F-type ATPases have 2 components, CF(1) - the catalytic core - and CF(0) - the membrane proton channel. CF(1) has five subunits: alpha(3), beta(3), gamma(1), delta(1), epsilon(1). CF(0) has four main subunits: a(1), b(1), b'(1) and c(9-12).

Its subcellular location is the cell inner membrane. It catalyses the reaction ATP + H2O + 4 H(+)(in) = ADP + phosphate + 5 H(+)(out). Its function is as follows. Produces ATP from ADP in the presence of a proton gradient across the membrane. The alpha chain is a regulatory subunit. The protein is ATP synthase subunit alpha of Rhodopseudomonas palustris (strain HaA2).